A 397-amino-acid polypeptide reads, in one-letter code: Ubiquitin-like modifier-activating enzyme 5 (397 aa).

Residues Gly77, Asp98, Lys121, Asn144, and Asn178 each coordinate ATP. 2 residues coordinate Zn(2+): Cys220 and Cys223. The active-site Glycyl thioester intermediate is the Cys244. Residues Cys297 and Cys302 each coordinate Zn(2+). A UFM1-interacting sequence (UIS) motif is present at residues 329-341 (VVHEDNDWGIELV). The segment at 342-372 (SEVSEEELKAASGPVPDLPEGIKVAYTIPIT) is linker. The UFC1-binding sequence (UFC) signature appears at 382 to 397 (DSEQSLDELMAQMKNL).

This sequence belongs to the ubiquitin-activating E1 family. UBA5 subfamily. In terms of assembly, homodimer; homodimerization is required for ufm1 activation. Interacts (via UIS motif) with ufm1; binds ufm1 via a trans-binding mechanism in which ufm1 interacts with distinct sites in both subunits of the uba5 homodimer. Interacts (via C-terminus) with ufc1.

The protein localises to the cytoplasm. It localises to the nucleus. The protein resides in the endoplasmic reticulum membrane. It is found in the golgi apparatus. In terms of biological role, E1-like enzyme which specifically catalyzes the first step in ufmylation. Activates ufm1 by first adenylating its C-terminal glycine residue with ATP, and thereafter linking this residue to the side chain of a cysteine residue in E1, yielding a ufm1-E1 thioester and free AMP. Activates ufm1 via a trans-binding mechanism, in which ufm1 interacts with distinct sites in both subunits of the uba5 homodimer. Trans-binding also promotes stabilization of the uba5 homodimer, and enhances ATP-binding. Transfer of ufm1 from uba5 to the E2-like enzyme UFC1 also takes place using a trans mechanism. Ufmylation plays a key role in various processes, such as ribosome recycling, response to DNA damage, interferon response or reticulophagy (also called ER-phagy). The polypeptide is Ubiquitin-like modifier-activating enzyme 5 (Xenopus laevis (African clawed frog)).